A 142-amino-acid chain; its full sequence is Large ribosomal subunit protein bL17 (142 aa).

The protein belongs to the bacterial ribosomal protein bL17 family. Part of the 50S ribosomal subunit. Contacts protein L32.

The protein is Large ribosomal subunit protein bL17 of Methylocella silvestris (strain DSM 15510 / CIP 108128 / LMG 27833 / NCIMB 13906 / BL2).